Reading from the N-terminus, the 197-residue chain is Transcription factor FapR (197 aa).

Belongs to the FapR family.

Transcriptional factor involved in regulation of membrane lipid biosynthesis by repressing genes involved in fatty acid and phospholipid metabolism. This is Transcription factor FapR from Bacillus cereus (strain B4264).